The primary structure comprises 21 residues: Cardiotoxin-like basic polypeptide ah (21 aa).

The protein belongs to the three-finger toxin family. Short-chain subfamily. Orphan group XV sub-subfamily. Post-translationally, contains 4 disulfide bonds. As to expression, expressed by the venom gland.

The protein resides in the secreted. The protein localises to the target cell membrane. Functionally, has hemolytic activity under low-lecithin conditions. Has low cytotoxic activity. Inhibits the expression of VEGF and bFGF in human non-small-cell lung cancer cell line NCI-H1299 in a dose-dependent manner. This chain is Cardiotoxin-like basic polypeptide ah, found in Naja atra (Chinese cobra).